A 101-amino-acid chain; its full sequence is MAKGQSLQDPYLNALRRERIPVSIYLVNGIKLQGQIESFDQFIILLKNTVSQMVYKHAISTVVPARSISHNNNGSSQAQAPQQAVQTTQPVEAIVATDKME.

Residues 9-68 form the Sm domain; sequence DPYLNALRRERIPVSIYLVNGIKLQGQIESFDQFIILLKNTVSQMVYKHAISTVVPARSI. The segment at 68–91 is disordered; sequence ISHNNNGSSQAQAPQQAVQTTQPV. The segment covering 77-91 has biased composition (low complexity); sequence QAQAPQQAVQTTQPV.

Belongs to the Hfq family. Homohexamer.

Its function is as follows. RNA chaperone that binds small regulatory RNA (sRNAs) and mRNAs to facilitate mRNA translational regulation in response to envelope stress, environmental stress and changes in metabolite concentrations. Also binds with high specificity to tRNAs. This Haemophilus ducreyi (strain 35000HP / ATCC 700724) protein is RNA-binding protein Hfq.